A 193-amino-acid chain; its full sequence is GTP cyclohydrolase 1 (193 aa).

Positions 83, 86, and 154 each coordinate Zn(2+).

This sequence belongs to the GTP cyclohydrolase I family. Homomer.

It catalyses the reaction GTP + H2O = 7,8-dihydroneopterin 3'-triphosphate + formate + H(+). It participates in cofactor biosynthesis; 7,8-dihydroneopterin triphosphate biosynthesis; 7,8-dihydroneopterin triphosphate from GTP: step 1/1. The protein is GTP cyclohydrolase 1 of Porphyromonas gingivalis (strain ATCC 33277 / DSM 20709 / CIP 103683 / JCM 12257 / NCTC 11834 / 2561).